A 269-amino-acid chain; its full sequence is Ribosomal RNA large subunit methyltransferase E (269 aa).

Residues Gly-48, Trp-50, Asp-68, Asp-86, and Asp-111 each contribute to the S-adenosyl-L-methionine site. Lys-151 acts as the Proton acceptor in catalysis. Positions 198-256 (PVAAGDRIEVTVEERGDEGDGIAYVEGYSIFVSDADVGETVTVEVVDAKPRFGFATRVD) constitute a TRAM domain.

This sequence belongs to the class I-like SAM-binding methyltransferase superfamily. RNA methyltransferase RlmE family.

Its subcellular location is the cytoplasm. The catalysed reaction is uridine(2552) in 23S rRNA + S-adenosyl-L-methionine = 2'-O-methyluridine(2552) in 23S rRNA + S-adenosyl-L-homocysteine + H(+). Its function is as follows. Specifically methylates the uridine in position 2552 of 23S rRNA at the 2'-O position of the ribose in the fully assembled 50S ribosomal subunit. This Halorubrum lacusprofundi (strain ATCC 49239 / DSM 5036 / JCM 8891 / ACAM 34) protein is Ribosomal RNA large subunit methyltransferase E.